Consider the following 547-residue polypeptide: Chaperonin GroEL (547 aa).

Residues 30–33 (TLGP), Lys51, 87–91 (DGTTT), Gly415, 479–481 (NAA), and Asp495 contribute to the ATP site.

This sequence belongs to the chaperonin (HSP60) family. In terms of assembly, forms a cylinder of 14 subunits composed of two heptameric rings stacked back-to-back. Interacts with the co-chaperonin GroES.

It is found in the cytoplasm. It carries out the reaction ATP + H2O + a folded polypeptide = ADP + phosphate + an unfolded polypeptide.. Its function is as follows. Together with its co-chaperonin GroES, plays an essential role in assisting protein folding. The GroEL-GroES system forms a nano-cage that allows encapsulation of the non-native substrate proteins and provides a physical environment optimized to promote and accelerate protein folding. This is Chaperonin GroEL from Pseudomonas aeruginosa (strain UCBPP-PA14).